Reading from the N-terminus, the 625-residue chain is DNA mismatch repair protein MutL (625 aa).

The interval 404–427 (PPPRNAPQSTGMPSMAGTGLPATS) is disordered.

It belongs to the DNA mismatch repair MutL/HexB family.

In terms of biological role, this protein is involved in the repair of mismatches in DNA. It is required for dam-dependent methyl-directed DNA mismatch repair. May act as a 'molecular matchmaker', a protein that promotes the formation of a stable complex between two or more DNA-binding proteins in an ATP-dependent manner without itself being part of a final effector complex. The polypeptide is DNA mismatch repair protein MutL (Xanthomonas oryzae pv. oryzae (strain MAFF 311018)).